The following is a 96-amino-acid chain: Secreted RxLR effector protein 123 (96 aa).

Positions 1 to 22 are cleaved as a signal peptide; it reads MVGAYYVGIALLVAGGSQTAAG. Positions 49–70 match the RxLR-dEER motif; it reads RFLRKSRNPKDNLMLSEANEER. Residues 57-96 form a disordered region; sequence PKDNLMLSEANEERTPSSPSNSLTEFIVSEPITTNVMRTE. Residues 87 to 96 show a composition bias toward polar residues; sequence PITTNVMRTE.

Belongs to the RxLR effector family.

Its subcellular location is the secreted. It is found in the host nucleus. The protein resides in the host cytoplasm. Its function is as follows. Secreted effector that dos not suppress the host cell death induced by cell death-inducing proteins. The polypeptide is Secreted RxLR effector protein 123 (Plasmopara viticola (Downy mildew of grapevine)).